The following is a 354-amino-acid chain: Membrane progestin receptor beta (354 aa).

Residues 1–76 (MTTAILERLS…FSLFQKHNEV (76 aa)) are Cytoplasmic-facing. The helical transmembrane segment at 77–97 (VNVWTHLLAALAVLLRFWAFV) threads the bilayer. The Extracellular segment spans residues 98-111 (EAGALQWASPHTLP). Residues 112 to 132 (LLLFILSSITYLTCSLLAHLL) traverse the membrane as a helical segment. Residues 133 to 173 (QSKSELSHYTFYFVDYVGVSVYQYGSALAHFFYSSDQAWYE) are Cytoplasmic-facing. Residues 174-194 (LFWIFFLPAAAFCGWLSCAGC) form a helical membrane-spanning segment. Residues 195–213 (CYAKYRYRRPYPVMRKICQ) are Extracellular-facing. Residues 214-234 (VVPAGLAFVLDISPVAHRVAL) form a helical membrane-spanning segment. The Cytoplasmic portion of the chain corresponds to 235–243 (CHLAGCQEQ). A helical transmembrane segment spans residues 244 to 264 (AAWYHTLQILFFLVSAYFFSC). Over 265–283 (PVPEKYFPGSCDIVGHGHQ) the chain is Extracellular. The helical transmembrane segment at 284–304 (IFHAFLSVCTLSQLEAILLDY) threads the bilayer. At 305-315 (QGRHEIFLQRH) the chain is on the cytoplasmic side. Residues 316–336 (GPLSVYSACLSFFVLAACSAA) traverse the membrane as a helical segment. Residues 337–354 (TATLLRHKVKDRLIKKDS) lie on the Extracellular side of the membrane.

It belongs to the ADIPOR family. Expressed in brain and testis.

The protein resides in the cell membrane. Its function is as follows. Plasma membrane progesterone (P4) receptor coupled to G proteins. Seems to act through a G(i) mediated pathway. May be involved in oocyte maturation. Also binds dehydroepiandrosterone (DHEA), pregnanolone, pregnenolone and allopregnanolone. In Mus musculus (Mouse), this protein is Membrane progestin receptor beta.